The following is a 330-amino-acid chain: PDZ and LIM domain protein 4 (330 aa).

Residues 1–84 (MPHSVTLRGP…HLTLSVSRPE (84 aa)) enclose the PDZ domain. The tract at residues 104-180 (IDPEIQDGSP…DPARGLPRSR (77 aa)) is disordered. Low complexity predominate over residues 111–121 (GSPTTSRRPSG). A phosphoserine mark is found at Ser112, Ser116, Ser120, and Ser135. Over residues 148-163 (NGSSEATLPAQMSTLH) the composition is skewed to polar residues. An LIM zinc-binding domain is found at 253–312 (PECTRCGHGIVGTIVKARDKLYHPECFMCSDCGLNLKQRGYFFLDERLYCESHAKARVKP).

In terms of assembly, homodimer. Interacts with PTPN13. Interacts (via C-terminus only or via combined C-terminus and LIM domain, but not LIM domain only) with PTPN13 (via the second or fourth PDZ domains). Found in a complex with PTPN13 and TRIP6. Interacts (via PDZ domain) with ACTN1 and ACTN2 (via C-terminal SDL residues). Interacts (via PDZ domain) with TRIP6 (via the second LIM domain or via the third LIM domain plus C-terminus). Interacts (via LIM domain) with GRIA1 (via C-terminus); this interaction as well as the interaction with alpha-actinin is required for their colocalization in early endosomes. Interacts with PDLIM1. Forms (via LIM domain) a heterodimer with PDLIM3. Interacts directly with SRC (via kinase domain and to a lesser extent the SH2 domain). Isoform 2 interacts with NQO1. NQO1-stabilized isoform 2 heterodimerizes with isoform 1. Post-translationally, phosphorylated on tyrosine residue(s). Can be dephosphorylated by PTPN13. As to expression, found in brain.

The protein resides in the cytoplasm. The protein localises to the cytoskeleton. It is found in the nucleus. Its subcellular location is the perinuclear region. It localises to the cell projection. The protein resides in the lamellipodium. The protein localises to the dendritic spine. It is found in the early endosome membrane. Its subcellular location is the recycling endosome membrane. It localises to the synapse. The protein resides in the synaptosome. Functionally, suppresses SRC activation by recognizing and binding to active SRC and facilitating PTPN13-mediated dephosphorylation of SRC 'Tyr-419' leading to its inactivation. Inactivated SRC dissociates from this protein allowing the initiation of a new SRC inactivation cycle. Involved in reorganization of the actin cytoskeleton. In nonmuscle cells, binds to ACTN1 (alpha-actinin-1), increases the affinity of ACTN1 to F-actin (filamentous actin), and promotes formation of actin stress fibers. Involved in regulation of the synaptic AMPA receptor transport in dendritic spines of hippocampal pyramidal neurons directing the receptors toward an insertion at the postsynaptic membrane. Links endosomal surface-internalized GRIA1-containing AMPA receptors to the alpha-actinin/actin cytoskeleton. Increases AMPA receptor-mediated excitatory postsynaptic currents in neurons. Involved in reorganization of the actin cytoskeleton and in regulation of cell migration. In response to oxidative stress, binds to NQO1, which stabilizes it and protects it from ubiquitin-independent degradation by the core 20S proteasome. Stabilized protein is able to heterodimerize with isoform 1 changing the subcellular location of it from cytoskeleton and nuclei to cytosol, leading to loss of isoforms 1 ability to induce formation of actin stress fibers. Counteracts the effects produced by isoform 1 on organization of actin cytoskeleton and cell motility to fine-tune actin cytoskeleton rearrangement and to attenuate cell migration. In Homo sapiens (Human), this protein is PDZ and LIM domain protein 4 (PDLIM4).